Consider the following 377-residue polypeptide: Nitric oxide reductase FlRd-NAD(+) reductase (377 aa).

It belongs to the FAD-dependent oxidoreductase family. The cofactor is FAD.

The protein localises to the cytoplasm. It carries out the reaction 2 reduced [nitric oxide reductase rubredoxin domain] + NAD(+) + H(+) = 2 oxidized [nitric oxide reductase rubredoxin domain] + NADH. It functions in the pathway nitrogen metabolism; nitric oxide reduction. In terms of biological role, one of at least two accessory proteins for anaerobic nitric oxide (NO) reductase. Reduces the rubredoxin moiety of NO reductase. The chain is Nitric oxide reductase FlRd-NAD(+) reductase from Salmonella enteritidis PT4 (strain P125109).